A 150-amino-acid chain; its full sequence is UPF0506 protein SJCHGC03144 (150 aa).

An N-terminal signal peptide occupies residues 1–18; sequence MNTCIQLLILCLVTVINS. N-linked (GlcNAc...) asparagine glycans are attached at residues Asn-20, Asn-36, Asn-52, and Asn-110. 3 disulfide bridges follow: Cys-116–Cys-130, Cys-123–Cys-134, and Cys-129–Cys-139.

The protein belongs to the UPF0506 family.

It localises to the secreted. The polypeptide is UPF0506 protein SJCHGC03144 (Schistosoma japonicum (Blood fluke)).